A 276-amino-acid polypeptide reads, in one-letter code: Small ribosomal subunit protein uS3 (276 aa).

The KH type-2 domain maps to 39 to 110; it reads IRRETMKFLK…KINIKIKEIK (72 aa).

This sequence belongs to the universal ribosomal protein uS3 family. Part of the 30S ribosomal subunit. Forms a tight complex with proteins S10 and S14.

In terms of biological role, binds the lower part of the 30S subunit head. Binds mRNA in the 70S ribosome, positioning it for translation. The chain is Small ribosomal subunit protein uS3 from Borrelia turicatae (strain 91E135).